Consider the following 104-residue polypeptide: Large ribosomal subunit protein uL24 (104 aa).

It belongs to the universal ribosomal protein uL24 family. Part of the 50S ribosomal subunit.

In terms of biological role, one of two assembly initiator proteins, it binds directly to the 5'-end of the 23S rRNA, where it nucleates assembly of the 50S subunit. One of the proteins that surrounds the polypeptide exit tunnel on the outside of the subunit. This is Large ribosomal subunit protein uL24 from Psychromonas ingrahamii (strain DSM 17664 / CCUG 51855 / 37).